Reading from the N-terminus, the 51-residue chain is Large ribosomal subunit protein bL32c (51 aa).

Belongs to the bacterial ribosomal protein bL32 family.

Its subcellular location is the plastid. The protein localises to the chloroplast. This chain is Large ribosomal subunit protein bL32c, found in Oenothera elata subsp. hookeri (Hooker's evening primrose).